We begin with the raw amino-acid sequence, 156 residues long: Cell division protein SepF (156 aa).

The disordered stretch occupies residues 17 to 44; the sequence is PETADYYEDQQPAQQAPAPVPTPAPTRS.

It belongs to the SepF family. Homodimer. Interacts with FtsZ.

The protein resides in the cytoplasm. Functionally, cell division protein that is part of the divisome complex and is recruited early to the Z-ring. Probably stimulates Z-ring formation, perhaps through the cross-linking of FtsZ protofilaments. Its function overlaps with FtsA. In Limosilactobacillus fermentum (strain NBRC 3956 / LMG 18251) (Lactobacillus fermentum), this protein is Cell division protein SepF.